A 490-amino-acid chain; its full sequence is One cut domain family member 3 (490 aa).

3 disordered regions span residues 130–155, 193–213, and 287–316; these read GAHG…QRLA, LSPL…PPPP, and HGPH…AAAE. Residues 143-152 are compositionally biased toward pro residues; that stretch reads ATAPPPPPPQ. Residues 290 to 311 are compositionally biased toward gly residues; the sequence is HSGGGGPGGGGGAGGGSGGPGA. The segment at residues 309 to 395 is a DNA-binding region (CUT); sequence PGAGAAAEEI…QRMSALRLAA (87 aa). Positions 411 to 470 form a DNA-binding region, homeobox; it reads PKKQRLVFTDLQRRTLIAIFKENKRPSKEMQATISQQLGLELNTVSNFFMNARRRCMNRW.

It belongs to the CUT homeobox family. As to expression, specifically expressed in brain, stomach and gut. Within the gut, expressed only in duodenum and jejunum.

It is found in the nucleus. Transcriptional activator. Binds the consensus DNA sequence 5'-DHWATTGAYTWWD-3' on a variety of gene promoters such as those of HNF3B and TTR. In Mus musculus (Mouse), this protein is One cut domain family member 3 (Onecut3).